A 154-amino-acid polypeptide reads, in one-letter code: Ribosome maturation factor RimP (154 aa).

This sequence belongs to the RimP family.

It is found in the cytoplasm. Required for maturation of 30S ribosomal subunits. The protein is Ribosome maturation factor RimP of Yersinia pseudotuberculosis serotype O:1b (strain IP 31758).